A 257-amino-acid chain; its full sequence is Ribonuclease HII (257 aa).

The region spanning 72–257 (TYIAGIDEVG…FAPIKDMIQK (186 aa)) is the RNase H type-2 domain. 3 residues coordinate a divalent metal cation: Asp78, Glu79, and Asp170.

Belongs to the RNase HII family. Mn(2+) serves as cofactor. The cofactor is Mg(2+).

It is found in the cytoplasm. The catalysed reaction is Endonucleolytic cleavage to 5'-phosphomonoester.. Endonuclease that specifically degrades the RNA of RNA-DNA hybrids. The polypeptide is Ribonuclease HII (Bacillus cereus (strain AH820)).